A 245-amino-acid polypeptide reads, in one-letter code: Ribonuclease 3 (245 aa).

Positions 24–146 constitute an RNase III domain; that stretch reads YAVFLQKLGY…IIGAIYLESG (123 aa). Glu-59 is a binding site for Mg(2+). Asp-63 is an active-site residue. The Mg(2+) site is built by Asn-132 and Glu-135. Glu-135 is an active-site residue. One can recognise a DRBM domain in the interval 173–243; it reads DSKTLLQEYL…ARQAYELAIV (71 aa).

It belongs to the ribonuclease III family. In terms of assembly, homodimer. Requires Mg(2+) as cofactor.

It localises to the cytoplasm. The enzyme catalyses Endonucleolytic cleavage to 5'-phosphomonoester.. Its function is as follows. Digests double-stranded RNA. Involved in the processing of primary rRNA transcript to yield the immediate precursors to the large and small rRNAs (23S and 16S). Processes some mRNAs, and tRNAs when they are encoded in the rRNA operon. Processes pre-crRNA and tracrRNA of type II CRISPR loci if present in the organism. The sequence is that of Ribonuclease 3 from Nitrosomonas europaea (strain ATCC 19718 / CIP 103999 / KCTC 2705 / NBRC 14298).